The chain runs to 378 residues: Chaperone protein DnaJ (378 aa).

In terms of domain architecture, J spans 5–69 (EYYDRLGVSK…QKRAAYDQYG (65 aa)). The CR-type zinc-finger motif lies at 134–216 (GVEKEVSYNR…CHGTGHEKQA (83 aa)). Positions 147, 150, 164, 167, 190, 193, 204, and 207 each coordinate Zn(2+). 4 CXXCXGXG motif repeats span residues 147-154 (CGTCLGSG), 164-171 (CRKCHGSG), 190-197 (CDICHGSG), and 204-211 (CQTCHGTG).

Belongs to the DnaJ family. In terms of assembly, homodimer. It depends on Zn(2+) as a cofactor.

Its subcellular location is the cytoplasm. Functionally, participates actively in the response to hyperosmotic and heat shock by preventing the aggregation of stress-denatured proteins and by disaggregating proteins, also in an autonomous, DnaK-independent fashion. Unfolded proteins bind initially to DnaJ; upon interaction with the DnaJ-bound protein, DnaK hydrolyzes its bound ATP, resulting in the formation of a stable complex. GrpE releases ADP from DnaK; ATP binding to DnaK triggers the release of the substrate protein, thus completing the reaction cycle. Several rounds of ATP-dependent interactions between DnaJ, DnaK and GrpE are required for fully efficient folding. Also involved, together with DnaK and GrpE, in the DNA replication of plasmids through activation of initiation proteins. This is Chaperone protein DnaJ from Streptococcus pyogenes serotype M1.